Here is a 354-residue protein sequence, read N- to C-terminus: Peptide chain release factor 1 (354 aa).

Glutamine 233 bears the N5-methylglutamine mark.

This sequence belongs to the prokaryotic/mitochondrial release factor family. In terms of processing, methylated by PrmC. Methylation increases the termination efficiency of RF1.

Its subcellular location is the cytoplasm. Functionally, peptide chain release factor 1 directs the termination of translation in response to the peptide chain termination codons UAG and UAA. This is Peptide chain release factor 1 from Clostridioides difficile (strain 630) (Peptoclostridium difficile).